A 152-amino-acid chain; its full sequence is SsrA-binding protein (152 aa).

This sequence belongs to the SmpB family.

It is found in the cytoplasm. Required for rescue of stalled ribosomes mediated by trans-translation. Binds to transfer-messenger RNA (tmRNA), required for stable association of tmRNA with ribosomes. tmRNA and SmpB together mimic tRNA shape, replacing the anticodon stem-loop with SmpB. tmRNA is encoded by the ssrA gene; the 2 termini fold to resemble tRNA(Ala) and it encodes a 'tag peptide', a short internal open reading frame. During trans-translation Ala-aminoacylated tmRNA acts like a tRNA, entering the A-site of stalled ribosomes, displacing the stalled mRNA. The ribosome then switches to translate the ORF on the tmRNA; the nascent peptide is terminated with the 'tag peptide' encoded by the tmRNA and targeted for degradation. The ribosome is freed to recommence translation, which seems to be the essential function of trans-translation. The chain is SsrA-binding protein from Rickettsia massiliae (strain Mtu5).